The primary structure comprises 115 residues: Superoxide reductase (115 aa).

Residues E14, H16, H41, H47, C102, and H105 each contribute to the Fe cation site.

It belongs to the desulfoferrodoxin family. In terms of assembly, homotetramer. The cofactor is Fe cation.

The catalysed reaction is reduced [rubredoxin] + superoxide + 2 H(+) = oxidized [rubredoxin] + H2O2. Uses electrons from reduced NADP, by way of rubredoxin and an oxidoreductase, to catalyze the reduction of superoxide to hydrogen peroxide. This Thermococcus kodakarensis (strain ATCC BAA-918 / JCM 12380 / KOD1) (Pyrococcus kodakaraensis (strain KOD1)) protein is Superoxide reductase (sorA).